Reading from the N-terminus, the 273-residue chain is Pyridoxal phosphate homeostasis protein (273 aa).

The residue at position 6 (S6) is a Phosphoserine. N6-(pyridoxal phosphate)lysine is present on K47. Residue Y69 is modified to Phosphotyrosine. K125 is subject to N6-succinyllysine. 2 positions are modified to phosphoserine: S226 and S244. Residues 251-260 (DYSKKTDKPA) show a composition bias toward basic and acidic residues. Residues 251-273 (DYSKKTDKPAAELQAPEEVAQAH) form a disordered region.

It belongs to the pyridoxal phosphate-binding protein YggS/PROSC family.

In terms of biological role, pyridoxal 5'-phosphate (PLP)-binding protein, which may be involved in intracellular homeostatic regulation of pyridoxal 5'-phosphate (PLP), the active form of vitamin B6. This is Pyridoxal phosphate homeostasis protein from Bos taurus (Bovine).